Consider the following 220-residue polypeptide: Urease accessory protein UreE (220 aa).

Positions 145-220 (EGGAYSAGGH…QIHKRRPDNL (76 aa)) are disordered. A compositionally biased stretch (basic and acidic residues) spans 156 to 177 (HGHDHGSHEHSAHDHGKHDHAP). The span at 178-188 (AKPATAATPAA) shows a compositional bias: low complexity. Over residues 191 to 206 (HGPDCNHGHDHAHEAK) the composition is skewed to basic and acidic residues.

This sequence belongs to the UreE family.

The protein localises to the cytoplasm. Its function is as follows. Involved in urease metallocenter assembly. Binds nickel. Probably functions as a nickel donor during metallocenter assembly. The protein is Urease accessory protein UreE of Polaromonas sp. (strain JS666 / ATCC BAA-500).